Reading from the N-terminus, the 504-residue chain is Glutamate--tRNA ligase (504 aa).

Positions 14–24 (PSPTGYLHVGG) match the 'HIGH' region motif. Residues 261-265 (KLSKR) carry the 'KMSKS' region motif. K264 contacts ATP.

Belongs to the class-I aminoacyl-tRNA synthetase family. Glutamate--tRNA ligase type 1 subfamily. In terms of assembly, monomer.

The protein localises to the cytoplasm. It catalyses the reaction tRNA(Glu) + L-glutamate + ATP = L-glutamyl-tRNA(Glu) + AMP + diphosphate. Its function is as follows. Catalyzes the attachment of glutamate to tRNA(Glu) in a two-step reaction: glutamate is first activated by ATP to form Glu-AMP and then transferred to the acceptor end of tRNA(Glu). The sequence is that of Glutamate--tRNA ligase from Chlorobium luteolum (strain DSM 273 / BCRC 81028 / 2530) (Pelodictyon luteolum).